A 126-amino-acid polypeptide reads, in one-letter code: Aspartate 1-decarboxylase (126 aa).

Ser25 serves as the catalytic Schiff-base intermediate with substrate; via pyruvic acid. A Pyruvic acid (Ser) modification is found at Ser25. Thr57 provides a ligand contact to substrate. The Proton donor role is filled by Tyr58. A substrate-binding site is contributed by 73-75 (GSA).

This sequence belongs to the PanD family. Heterooctamer of four alpha and four beta subunits. Pyruvate serves as cofactor. In terms of processing, is synthesized initially as an inactive proenzyme, which is activated by self-cleavage at a specific serine bond to produce a beta-subunit with a hydroxyl group at its C-terminus and an alpha-subunit with a pyruvoyl group at its N-terminus.

Its subcellular location is the cytoplasm. It catalyses the reaction L-aspartate + H(+) = beta-alanine + CO2. The protein operates within cofactor biosynthesis; (R)-pantothenate biosynthesis; beta-alanine from L-aspartate: step 1/1. Functionally, catalyzes the pyruvoyl-dependent decarboxylation of aspartate to produce beta-alanine. The chain is Aspartate 1-decarboxylase from Acidovorax ebreus (strain TPSY) (Diaphorobacter sp. (strain TPSY)).